The chain runs to 435 residues: Putative GMP synthase [glutamine-hydrolyzing] 2 (435 aa).

Residues 1-120 (MKQDMIVILD…VFDTCQAEAN (120 aa)) enclose the Glutamine amidotransferase type-1; truncated domain. Positions 121–310 (WNMANFVNDQ…LGLPYEMVYR (190 aa)) constitute a GMPS ATP-PPase domain. 148 to 154 (SGGVDSS) is an ATP binding site.

As to quaternary structure, homodimer.

It carries out the reaction XMP + L-glutamine + ATP + H2O = GMP + L-glutamate + AMP + diphosphate + 2 H(+). The protein operates within purine metabolism; GMP biosynthesis; GMP from XMP (L-Gln route): step 1/1. Its function is as follows. Catalyzes the synthesis of GMP from XMP. The protein is Putative GMP synthase [glutamine-hydrolyzing] 2 (guaA2) of Bacteroides thetaiotaomicron (strain ATCC 29148 / DSM 2079 / JCM 5827 / CCUG 10774 / NCTC 10582 / VPI-5482 / E50).